The following is a 190-amino-acid chain: Protein GrpE (190 aa).

Residues 1–40 (MAKEKKEEVKEEEVSEATSTEGSTDVESTNNDDLTTETQA) form a disordered region. Residues 22–40 (GSTDVESTNNDDLTTETQA) show a composition bias toward polar residues.

Belongs to the GrpE family. In terms of assembly, homodimer.

The protein localises to the cytoplasm. Its function is as follows. Participates actively in the response to hyperosmotic and heat shock by preventing the aggregation of stress-denatured proteins, in association with DnaK and GrpE. It is the nucleotide exchange factor for DnaK and may function as a thermosensor. Unfolded proteins bind initially to DnaJ; upon interaction with the DnaJ-bound protein, DnaK hydrolyzes its bound ATP, resulting in the formation of a stable complex. GrpE releases ADP from DnaK; ATP binding to DnaK triggers the release of the substrate protein, thus completing the reaction cycle. Several rounds of ATP-dependent interactions between DnaJ, DnaK and GrpE are required for fully efficient folding. The chain is Protein GrpE from Pediococcus pentosaceus (strain ATCC 25745 / CCUG 21536 / LMG 10740 / 183-1w).